The sequence spans 524 residues: Sexual development regulator velC (524 aa).

4 disordered regions span residues N114 to S195, P322 to Y349, V380 to R413, and G503 to E524. 2 stretches are compositionally biased toward polar residues: residues T131–G153 and L178–S195. The 253-residue stretch at S248–R500 folds into the Velvet domain. Polar residues predominate over residues P393–D402.

Belongs to the velvet family. VelC subfamily. As to quaternary structure, interacts with vosA.

It localises to the nucleus. Its function is as follows. Velvet-domain-containing protein that acts as a positive regulator of sexual development. Positively regulates the production of the sexual fruiting bodies called cleistothecia. The sequence is that of Sexual development regulator velC from Emericella nidulans (strain FGSC A4 / ATCC 38163 / CBS 112.46 / NRRL 194 / M139) (Aspergillus nidulans).